Here is a 344-residue protein sequence, read N- to C-terminus: tRNA N6-adenosine threonylcarbamoyltransferase (344 aa).

Histidine 110 and histidine 114 together coordinate Fe cation. Substrate contacts are provided by residues 132 to 136 (LVSGG), aspartate 166, glycine 179, aspartate 183, and asparagine 278. Aspartate 306 lines the Fe cation pocket.

It belongs to the KAE1 / TsaD family. Fe(2+) is required as a cofactor.

Its subcellular location is the cytoplasm. It catalyses the reaction L-threonylcarbamoyladenylate + adenosine(37) in tRNA = N(6)-L-threonylcarbamoyladenosine(37) in tRNA + AMP + H(+). Functionally, required for the formation of a threonylcarbamoyl group on adenosine at position 37 (t(6)A37) in tRNAs that read codons beginning with adenine. Is involved in the transfer of the threonylcarbamoyl moiety of threonylcarbamoyl-AMP (TC-AMP) to the N6 group of A37, together with TsaE and TsaB. TsaD likely plays a direct catalytic role in this reaction. The protein is tRNA N6-adenosine threonylcarbamoyltransferase of Nocardia farcinica (strain IFM 10152).